A 542-amino-acid polypeptide reads, in one-letter code: MAELDQLPDESSSAKALVSLKEGSLSNTWNEKYSSLQKTPVWKGRNAGPAVEMPFRNSKRSRLFSDEDDRQINTKSPKRNQRVAMIPQKFTATMSTPDKKASQKIGFRLRNLLKLPKAHKWCIYEWFYSNIDKPLFEGDNDFCVCLKESFPNLKTRKLTRVEWGKIRRLMGKPRRCSSAFFEEERSALKQKRQKIRLLQQRKVADVSQFKDLPDEIPLPLVIGTKVTARLRGIHDGLFTGQIDAVDTLNATYRVTFDRTGLGTHTIPDYEVLSNEPHETMPISAFGQKQRPSRFFMTPPRLHYTPPLQSPITDGDPLLGQSPWRSKVSGSDTETLGGFPVEFLIQVTKLSKILMIKKEHIKKLREMNTEAEKLKSYSMPIGIEFQRRYATIVLELEQLNKDLNKVLHKVQQYCYELAPDQGLQPADQPTDMRRRCEEEAQEIVRQANSASGQPCVENENLTDLISRLTAILLQIKCLAEGGDLNSFEFKSLTDSLNDIKNTIDASNISCFQNNVEIHVAHIQSGLSQMGNLHAFAANNTNRD.

An N-acetylalanine modification is found at Ala2. Lys21 participates in a covalent cross-link: Glycyl lysine isopeptide (Lys-Gly) (interchain with G-Cter in SUMO2). 2 positions are modified to phosphoserine: Ser65 and Ser95. Phosphothreonine occurs at positions 96 and 304. Phosphoserine occurs at positions 309 and 321.

It belongs to the lin-9 family. As to quaternary structure, component of the DREAM complex (also named LINC complex) at least composed of E2F4, E2F5, LIN9, LIN37, LIN52, LIN54, MYBL1, MYBL2, RBL1, RBL2, RBBP4, TFDP1 and TFDP2. The complex exists in quiescent cells where it represses cell cycle-dependent genes. It dissociates in S phase when LIN9, LIN37, LIN52 and LIN54 form a subcomplex that binds to MYBL2. Interacts with RB1.

The protein localises to the nucleus. It is found in the nucleoplasm. Functionally, acts as a tumor suppressor. Inhibits DNA synthesis. Its ability to inhibit oncogenic transformation is mediated through its association with RB1. Plays a role in the expression of genes required for the G1/S transition. This is Protein lin-9 homolog (Lin9) from Mus musculus (Mouse).